A 651-amino-acid polypeptide reads, in one-letter code: Probable Xaa-Pro aminopeptidase P (651 aa).

Mn(2+) is bound by residues D448, D459, E557, and E571.

This sequence belongs to the peptidase M24B family. The cofactor is Mn(2+).

It catalyses the reaction Release of any N-terminal amino acid, including proline, that is linked to proline, even from a dipeptide or tripeptide.. Functionally, catalyzes the removal of a penultimate prolyl residue from the N-termini of peptides. The sequence is that of Probable Xaa-Pro aminopeptidase P (AMPP) from Coccidioides posadasii (strain C735) (Valley fever fungus).